A 210-amino-acid polypeptide reads, in one-letter code: Homeobox protein Rhox5 (210 aa).

Positions 1–119 (MEAEGSSRKV…GNPGGRQMPL (119 aa)) are disordered. A compositionally biased stretch (basic and acidic residues) spans 17–30 (GVKEDSEEQHDVKA). The span at 47–79 (GQPGVGAVGTEGEGEELNGGKGHFGPGAPGPMG) shows a compositional bias: gly residues. Positions 117–175 (MPLQGSRFAQHRLRELESILQRTNSFDVPREDLDRLMDACVSRVQNWFKIRRAAARRTR) form a DNA-binding region, homeobox; atypical.

The protein resides in the nucleus. In terms of biological role, transcription factor required for differentiation of embryonic stem cells (ESCs) into primordial germ cells. The polypeptide is Homeobox protein Rhox5 (Rhox5) (Mus musculus (Mouse)).